The chain runs to 541 residues: Phosphatidylethanolamine transferase Mcr-1 (541 aa).

At 1 to 14 (MMQHTSVWYRRSVS) the chain is on the cytoplasmic side. A helical membrane pass occupies residues 15–35 (PFVLVASVAVFLTATANLTFF). Topologically, residues 36-47 (DKISQTYPIADN) are periplasmic. The chain crosses the membrane as a helical span at residues 48-68 (LGFVLTIAVVLFGAMLLITTL). Residues 69-73 (LSSYR) are Cytoplasmic-facing. A helical transmembrane segment spans residues 74-94 (YVLKPVLILLLIMGAVTSYFT). The Periplasmic portion of the chain corresponds to 95-122 (DTYGTVYDTTMLQNALQTDQAETKDLLN). Residues 123–143 (AAFIMRIIGLGVLPSLLVAFV) traverse the membrane as a helical segment. The Cytoplasmic portion of the chain corresponds to 144–157 (KVDYPTWGKGLMRR). The chain crosses the membrane as a helical span at residues 158 to 178 (LGLIVASLALILLPVVAFSSH). Topologically, residues 179 to 541 (YASFFRVHKP…KVKDRTAFIR (363 aa)) are periplasmic. Residues Glu-246 and Thr-285 each coordinate Zn(2+). Disulfide bonds link Cys-281–Cys-291, Cys-356–Cys-364, and Cys-414–Cys-422. Position 285 is a phosphothreonine (Thr-285). The Zn(2+) site is built by Asp-465 and His-466.

This sequence belongs to the phosphoethanolamine transferase family. As to quaternary structure, monomer. Phosphorylated at Thr-285; may represent an intermediate in the catalytic mechanism.

Its subcellular location is the cell inner membrane. It carries out the reaction lipid A (E. coli) + a 1,2-diacyl-sn-glycero-3-phosphoethanolamine + H(+) = lipid A 4'-(2-aminoethyl diphosphate) (E. coli) + a 1,2-diacyl-sn-glycerol. Its activity is regulated as follows. EDTA may inhibit activity. May be inhibited by ethanolamine. Functionally, probably catalyzes the addition of a phosphoethanolamine moiety to lipid A. Phosphoethanolamine modification of lipid A confers polymyxin resistance. Confers resistance to polymyxin-type antibiotics such as colistin; in the E.coli strain W3110. The polypeptide is Phosphatidylethanolamine transferase Mcr-1 (mcr1) (Escherichia coli).